Consider the following 274-residue polypeptide: Large ribosomal subunit protein uL2cz/uL2cy (274 aa).

Disordered regions lie at residues 1–21 (MAIHLYKTSTPGTRNGAVDSQ) and 224–274 (NPVD…RRSK).

The protein belongs to the universal ribosomal protein uL2 family. Part of the 50S ribosomal subunit.

It localises to the plastid. Its subcellular location is the chloroplast. This Gossypium hirsutum (Upland cotton) protein is Large ribosomal subunit protein uL2cz/uL2cy (rpl2-A).